The primary structure comprises 274 residues: MSVQSTIRRKTAPDIRARKGGDPIVMLTSYHAHTASLVDRYCDAILVGDSLGNVMHGFETTVPVTLEMMILQGHAVMRGSQHALVVVDMPFGSYEASKEQAFHSAARILKETHCGAVKLEGGVRMAETIAFLTERGIPVMGHIGLTPQSINTLGSFRAQGREEGSWEPIEADARAVADAGAFSVVVEAVAEPLGRKITEMISIPTIGIGASAACDGQVLVLEDMLGLSPKPPKFVKRYGDLGPGIEAAIKGYAEEVRSRAFPGPEHVYGMKSKA.

Positions 49 and 88 each coordinate Mg(2+). Residues 49–50 (DS), Asp-88, and Lys-118 contribute to the 3-methyl-2-oxobutanoate site. Residue Glu-120 coordinates Mg(2+). The active-site Proton acceptor is Glu-187.

The protein belongs to the PanB family. As to quaternary structure, homodecamer; pentamer of dimers. It depends on Mg(2+) as a cofactor.

Its subcellular location is the cytoplasm. It catalyses the reaction 3-methyl-2-oxobutanoate + (6R)-5,10-methylene-5,6,7,8-tetrahydrofolate + H2O = 2-dehydropantoate + (6S)-5,6,7,8-tetrahydrofolate. It functions in the pathway cofactor biosynthesis; (R)-pantothenate biosynthesis; (R)-pantoate from 3-methyl-2-oxobutanoate: step 1/2. Its function is as follows. Catalyzes the reversible reaction in which hydroxymethyl group from 5,10-methylenetetrahydrofolate is transferred onto alpha-ketoisovalerate to form ketopantoate. In Rhodopseudomonas palustris (strain ATCC BAA-98 / CGA009), this protein is 3-methyl-2-oxobutanoate hydroxymethyltransferase.